The primary structure comprises 138 residues: ATP synthase epsilon chain (138 aa).

It belongs to the ATPase epsilon chain family. In terms of assembly, F-type ATPases have 2 components, CF(1) - the catalytic core - and CF(0) - the membrane proton channel. CF(1) has five subunits: alpha(3), beta(3), gamma(1), delta(1), epsilon(1). CF(0) has three main subunits: a, b and c.

It localises to the cell inner membrane. Functionally, produces ATP from ADP in the presence of a proton gradient across the membrane. This Psychrobacter sp. (strain PRwf-1) protein is ATP synthase epsilon chain.